Here is a 93-residue protein sequence, read N- to C-terminus: Integration host factor subunit beta (93 aa).

The protein belongs to the bacterial histone-like protein family. Heterodimer of an alpha and a beta chain.

In terms of biological role, this protein is one of the two subunits of integration host factor, a specific DNA-binding protein that functions in genetic recombination as well as in transcriptional and translational control. This Actinobacillus pleuropneumoniae serotype 7 (strain AP76) protein is Integration host factor subunit beta.